Here is a 105-residue protein sequence, read N- to C-terminus: UPF0145 protein Sala_0338 (105 aa).

Belongs to the UPF0145 family.

The protein is UPF0145 protein Sala_0338 of Sphingopyxis alaskensis (strain DSM 13593 / LMG 18877 / RB2256) (Sphingomonas alaskensis).